Reading from the N-terminus, the 101-residue chain is Small ribosomal subunit protein uS14 (101 aa).

It belongs to the universal ribosomal protein uS14 family. As to quaternary structure, part of the 30S ribosomal subunit. Contacts proteins S3 and S10.

Binds 16S rRNA, required for the assembly of 30S particles and may also be responsible for determining the conformation of the 16S rRNA at the A site. In Synechococcus sp. (strain JA-2-3B'a(2-13)) (Cyanobacteria bacterium Yellowstone B-Prime), this protein is Small ribosomal subunit protein uS14.